Reading from the N-terminus, the 1245-residue chain is Structural polyprotein (1245 aa).

The segment at Met1–Met106 is disordered. The tract at residues Gly37–Arg70 is host transcription inhibition. Residues Leu38 to Val49 show a composition bias toward polar residues. A Nuclear localization signal motif is present at residues Pro63 to Pro100. Positions Pro67–Met106 are enriched in basic residues. The tract at residues Lys86–Leu115 is binding to the viral RNA. The tract at residues Pro100 to Arg114 is ribosome-binding. The region spanning Arg114–Trp264 is the Peptidase S3 domain. His141 acts as the Charge relay system in catalysis. Residues Ile146–Phe156 carry the Nuclear export signal motif. The interaction with spike glycoprotein E2 stretch occupies residues Thr157–Tyr162. Asp163 functions as the Charge relay system in the catalytic mechanism. The interval Pro185–Ala195 is dimerization of the capsid protein. Residue Ser215 is the Charge relay system of the active site. Residues Asp221 to Arg225 are dimerization of the capsid protein. Residues Ser249 to Thr253 form an interaction with spike glycoprotein E2 region. Residues Ser265–Val279 form a functions as an uncleaved signal peptide for the precursor of protein E3/E2 region. An N-linked (GlcNAc...) asparagine; by host glycan is attached at Asn278. Disulfide bonds link Cys283–Cys289, Cys480–Cys594, Cys529–Cys554, and Cys531–Cys548. Residues Ser329–Arg690 are Extracellular-facing. The N-linked (GlcNAc...) asparagine; by host glycan is linked to Asn524. Asn646 is a glycosylation site (N-linked (GlcNAc...) asparagine; by host). The chain crosses the membrane as a helical span at residues His691–Cys718. Positions Lys719–Glu723 are interaction with the capsid protein. Topologically, residues Lys719–Ala751 are cytoplasmic. S-palmitoyl cysteine; by host attachment occurs at residues Cys724, Cys744, and Cys745. Cys724 and Cys745 are disulfide-bonded. Topologically, residues Glu752 to Ser763 are extracellular. Residues Asn764–Met784 form a helical membrane-spanning segment. Residue Arg785 is a topological domain, cytoplasmic. Residues Cys786–Ala806 form a helical membrane-spanning segment. Residues Tyr807–Ser1214 lie on the Extracellular side of the membrane. Disulfide bonds link Cys855/Cys920, Cys868/Cys900, Cys869/Cys902, and Cys874/Cys884. The tract at residues Val890–Ser907 is E1 fusion peptide loop. Residues Asn945 and Asn1051 are each glycosylated (N-linked (GlcNAc...) asparagine; by host). Intrachain disulfides connect Cys1065/Cys1077, Cys1107/Cys1182, Cys1112/Cys1186, and Cys1134/Cys1176. Residues Trp1215–Met1239 traverse the membrane as a helical segment. At Leu1240–Arg1245 the chain is on the cytoplasmic side.

As to quaternary structure, homodimer. Homomultimer. Interacts with host karyopherin KPNA4; this interaction allows the nuclear import of the viral capsid protein. Interacts with spike glycoprotein E2. Interacts with host IRAK1; the interaction leads to inhibition of IRAK1-dependent signaling. In terms of assembly, the precursor of protein E3/E2 and E1 form a heterodimer shortly after synthesis. The precursor of protein E3/E2 and E1 form a heterodimer shortly after synthesis. Processing of the precursor of protein E3/E2 into E2 and E3 results in a heterodimer of the spike glycoproteins E2 and E1. Spike at virion surface are constituted of a trimer of E2-E1 heterodimers. After target cell attachment and endocytosis, E1 change conformation to form homotrimers. E2-E1 heterodimers interact with host VLDLR or LRP8/APOER2 to mediate viral entry. Interacts with 6K protein. As to quaternary structure, processing of the precursor of protein E3/E2 into E2 and E3 results in a heterodimer of the spike glycoproteins E2 and E1. Spike at virion surface are constituted of a trimer of E2-E1 heterodimers. E2-E1 heterodimers interact with host VLDLR or LRP8/APOER2 to mediate viral entry. Interacts with 6K protein. Interacts with the capsid protein. In terms of assembly, oligomer. Interacts with spike glycoprotein E1. Interacts with spike glycoprotein E2. Post-translationally, structural polyprotein: Specific enzymatic cleavages in vivo yield mature proteins. Capsid protein is auto-cleaved during polyprotein translation, unmasking a signal peptide at the N-terminus of the precursor of E3/E2. The remaining polyprotein is then targeted to the host endoplasmic reticulum, where host signal peptidase cleaves it into pE2, 6K and E1 proteins. pE2 is further processed to mature E3 and E2 by host furin in trans-Golgi vesicle. In terms of processing, palmitoylated via thioester bonds. These palmitoylations may induce disruption of the C-terminus transmembrane. This would result in the reorientation of E2 C-terminus from lumenal to cytoplasmic side. N-glycosylated. Post-translationally, palmitoylated via thioester bonds.

The protein localises to the virion. It is found in the host cytoplasm. The protein resides in the host cell membrane. Its subcellular location is the host nucleus. It localises to the virion membrane. The protein localises to the host Golgi apparatus. It is found in the host trans-Golgi network. The protein resides in the host endoplasmic reticulum. The catalysed reaction is Autocatalytic release of the core protein from the N-terminus of the togavirus structural polyprotein by hydrolysis of a -Trp-|-Ser- bond.. Forms an icosahedral capsid with a T=4 symmetry composed of 240 copies of the capsid protein surrounded by a lipid membrane through which penetrate 80 spikes composed of trimers of E1-E2 heterodimers. The capsid protein binds to the viral RNA genome at a site adjacent to a ribosome binding site for viral genome translation following genome release. Possesses a protease activity that results in its autocatalytic cleavage from the nascent structural protein. Following its self-cleavage, the capsid protein transiently associates with ribosomes, and within several minutes the protein binds to viral RNA and rapidly assembles into icosahedric core particles. The resulting nucleocapsid eventually associates with the cytoplasmic domain of the spike glycoprotein E2 at the cell membrane, leading to budding and formation of mature virions. In case of infection, new virions attach to target cells and after clathrin-mediated endocytosis their membrane fuses with the host endosomal membrane. This leads to the release of the nucleocapsid into the cytoplasm, followed by an uncoating event necessary for the genomic RNA to become accessible. The uncoating might be triggered by the interaction of capsid proteins with ribosomes. Binding of ribosomes would release the genomic RNA since the same region is genomic RNA-binding and ribosome-binding. Specifically inhibits interleukin-1 receptor-associated kinase 1/IRAK1-dependent signaling during viral entry, representing a means by which the alphaviruses may evade innate immune detection and activation prior to viral gene expression. Functionally, provides the signal sequence for the translocation of the precursor of protein E3/E2 to the host endoplasmic reticulum. Furin-cleaved E3 remains associated with spike glycoprotein E1 and mediates pH protection of the latter during the transport via the secretory pathway. After virion release from the host cell, the assembly protein E3 is gradually released in the extracellular space. Its function is as follows. Plays a role in viral attachment to target host cell, by binding to the cell receptors VLDLR or LRP8/APOER2. Synthesized as a pE2 precursor which is processed by furin at the cell membrane just before virion budding, giving rise to E2-E1 heterodimer. The pE2-E1 heterodimer is stable, whereas E2-E1 is unstable and dissociate at low pH. pE2 is processed at the last step, presumably to avoid E1 fusion activation before its final export to cell surface. E2 C-terminus contains a transitory transmembrane that would be disrupted by palmitoylation, resulting in reorientation of the C-terminal tail from lumenal to cytoplasmic side. This step is critical since E2 C-terminus is involved in budding by interacting with capsid proteins. This release of E2 C-terminus in cytoplasm occurs lately in protein export, and precludes premature assembly of particles at the endoplasmic reticulum membrane. In terms of biological role, acts as a viroporin that participates in virus glycoprotein processing and transport to the plasma membrane, cell permeabilization and budding of viral particles. Disrupts the calcium homeostasis of the cell, probably at the endoplasmic reticulum level resulting in the increased levels of cytoplasmic calcium. Because of its lipophilic properties, the 6K protein is postulated to influence the selection of lipids that interact with the transmembrane domains of the glycoproteins, which, in turn, affects the deformability of the bilayer required for the extreme curvature that occurs as budding proceeds. Present in low amount in virions, about 3% compared to viral glycoproteins. Class II viral fusion protein. Fusion activity is inactive as long as E1 is bound to E2 in mature virion. After virus attachment to target cell via host VLDLR or LRP8/APOER2 and endocytosis, acidification of the endosome induces dissociation of E1/E2 heterodimer and concomitant trimerization of the E1 subunits. This E1 trimer is fusion active, and promotes release of viral nucleocapsid in cytoplasm after endosome and viral membrane fusion. Efficient fusion requires the presence of cholesterol and sphingolipid in the target membrane. This is Structural polyprotein from Acrocephalus scirpaceus (Eurasian reed-warbler).